Here is a 202-residue protein sequence, read N- to C-terminus: MSRYRGPRVRIIRRLGALPGLTNKTPQLKSSSINQSTSNKKISQYRIRLEEKQKLRFHYGITERQLLNYVRIARKAKGSTGEVLLQLLEMRLDNIIFRLGMSPTIPGARQLVNHRHILVNGYIVDIPSYRCKPQDFITIKNQRKSETIISKNIEFYQKYKIPNHLIYNSLEKKGLVNQILDHESIGLKINELLVVEYYSRQA.

Residues 90 to 153 (MRLDNIIFRL…KSETIISKNI (64 aa)) form the S4 RNA-binding domain.

This sequence belongs to the universal ribosomal protein uS4 family. In terms of assembly, part of the 30S ribosomal subunit. Contacts protein S5. The interaction surface between S4 and S5 is involved in control of translational fidelity.

It localises to the plastid. The protein localises to the chloroplast. One of the primary rRNA binding proteins, it binds directly to 16S rRNA where it nucleates assembly of the body of the 30S subunit. In terms of biological role, with S5 and S12 plays an important role in translational accuracy. In Catharomnion ciliatum (Moss), this protein is Small ribosomal subunit protein uS4c (rps4).